Here is a 362-residue protein sequence, read N- to C-terminus: Lipoprotein p35 (362 aa).

The N-terminal stretch at 1-30 (MKIKKIKLLKALALTGAFGIVATVPVIVSS) is a signal peptide. A lipid anchor (N-palmitoyl cysteine) is attached at Cys-31. Cys-31 carries S-diacylglycerol cysteine lipidation. Positions 33–53 (STSENNGNGNGNGGTDGNTQQ) are disordered.

Belongs to the p35 lipoprotein family. The N-terminus is blocked.

The protein resides in the cell membrane. Major M.penetrans antigen. This Malacoplasma penetrans (Mycoplasma penetrans) protein is Lipoprotein p35.